Reading from the N-terminus, the 359-residue chain is Salicylate carboxymethyltransferase (359 aa).

Y18 contacts S-adenosyl-L-methionine. Substrate is bound by residues Y18, 21–25, and Q25; that span reads NSFIQ. Residues G59, 59–60, 59–61, N65, 96–99, D98, 129–131, and 146–148 contribute to the S-adenosyl-L-methionine site; these read GC, GCS, LNDL, SFY, and SYS. Substrate-binding positions include 147–151 and W151; that span reads YSLMW. Positions 162, 248, 250, and 251 each coordinate Mg(2+). Residue Y255 coordinates substrate.

It belongs to the methyltransferase superfamily. SABATH family.

It catalyses the reaction salicylate + S-adenosyl-L-methionine = methyl salicylate + S-adenosyl-L-homocysteine. Functionally, catalyzes the methylation of the free carboxyl end of the plant hormone salicylic acid (SA). Converts SA to SA methyl ester (MSA). The volatile compound MSA is hypothesized to act as an airborne signal that triggers defense responses in uninfected plants. MSA is an important chemoattractant for moth pollinated flowering plants. In Clarkia breweri (Fairy fans), this protein is Salicylate carboxymethyltransferase (SAMT).